The chain runs to 420 residues: Membrane protein UL43 homolog (420 aa).

A run of 11 helical transmembrane segments spans residues 58 to 78, 81 to 101, 114 to 134, 157 to 177, 181 to 201, 203 to 223, 278 to 298, 312 to 332, 343 to 363, 364 to 384, and 399 to 419; these read IFSI…IQFI, KIIY…AFIV, IGKP…TLIT, LMCF…CLAT, LTWK…ISAP, GNIS…INVV, QIPM…VIAL, TDML…IFIP, IIIL…FGLV, LGPT…CINI, and VVKS…LVAL.

This sequence belongs to the alphaherpesvirinae HHV-1 UL43 family.

The protein localises to the host membrane. The sequence is that of Membrane protein UL43 homolog (MDV056) from Gallus gallus (Chicken).